Reading from the N-terminus, the 298-residue chain is Tyrosine recombinase XerC (298 aa).

The region spanning 1–84 (MNHIQEAFLN…TLRTLYEYWM (84 aa)) is the Core-binding (CB) domain. One can recognise a Tyr recombinase domain in the interval 105–286 (YLPQFSLEEE…SNQQLRKVYL (182 aa)). Residues Arg-145, Lys-169, His-238, Arg-241, and His-264 contribute to the active site. The active-site O-(3'-phospho-DNA)-tyrosine intermediate is the Tyr-273.

Belongs to the 'phage' integrase family. XerC subfamily. As to quaternary structure, forms a cyclic heterotetrameric complex composed of two molecules of XerC and two molecules of XerD.

The protein localises to the cytoplasm. Its function is as follows. Site-specific tyrosine recombinase, which acts by catalyzing the cutting and rejoining of the recombining DNA molecules. The XerC-XerD complex is essential to convert dimers of the bacterial chromosome into monomers to permit their segregation at cell division. It also contributes to the segregational stability of plasmids. This chain is Tyrosine recombinase XerC, found in Staphylococcus aureus.